The sequence spans 547 residues: Cellodextrinase (547 aa).

Residue D148 is the Nucleophile of the active site. Residues H474, D520, and E529 contribute to the active site.

This sequence belongs to the glycosyl hydrolase 9 (cellulase E) family.

It is found in the secreted. It catalyses the reaction Endohydrolysis of (1-&gt;4)-beta-D-glucosidic linkages in cellulose, lichenin and cereal beta-D-glucans.. Its activity is regulated as follows. Is not inhibited by methylcellulose. Functionally, glycoside hydrolase that rapidly hydrolyzes short-chain cellodextrins to yield either cellobiose or cellobiose and glucose as end products; cellobiose is not hydrolyzed further. Also shows limited activity against endoglucanase specific substrates (carboxymethylcellulose (CMC), lichenan, laminarin and xylan). In Butyrivibrio fibrisolvens, this protein is Cellodextrinase.